The sequence spans 1090 residues: Leucine--tRNA ligase, cytoplasmic (1090 aa).

At S2 the chain carries N-acetylserine. A 'HIGH' region motif is present at residues 66-76 (PYMNGVMHAGH). The residue at position 142 (T142) is a Phosphothreonine. Positions 729–733 (KMSKS) match the 'KMSKS' region motif. K732 serves as a coordination point for ATP.

Belongs to the class-I aminoacyl-tRNA synthetase family.

The protein localises to the cytoplasm. It carries out the reaction tRNA(Leu) + L-leucine + ATP = L-leucyl-tRNA(Leu) + AMP + diphosphate. The sequence is that of Leucine--tRNA ligase, cytoplasmic (CDC60) from Saccharomyces cerevisiae (strain ATCC 204508 / S288c) (Baker's yeast).